Consider the following 164-residue polypeptide: Phospholipase A and acyltransferase 4 (164 aa).

Residues 1–40 are essential for its ability regulate keratinocyte differentiation; it reads MASPHQEPKPGDLIEIFRLGYEHWALYIGDGYVIHLAPPS. Over 1-134 the chain is Cytoplasmic; it reads MASPHQEPKP…SRCKQVEKAK (134 aa). The 117-residue stretch at 13–129 folds into the LRAT domain; that stretch reads LIEIFRLGYE…LRYGKSRCKQ (117 aa). Catalysis depends on residues H23 and H35. The Acyl-thioester intermediate role is filled by C113. The interval 124–164 is interaction with TGM1; that stretch reads KSRCKQVEKAKVEVGVATALGILVVAGCSFAIRRYQKKATA. The helical transmembrane segment at 135–155 threads the bilayer; that stretch reads VEVGVATALGILVVAGCSFAI. Over 156-164 the chain is Lumenal; it reads RRYQKKATA.

Belongs to the H-rev107 family. In terms of assembly, interacts with TGM1. In terms of tissue distribution, widely expressed.

The protein resides in the membrane. The catalysed reaction is a 1,2-diacyl-sn-glycero-3-phosphocholine + H2O = a 1-acyl-sn-glycero-3-phosphocholine + a fatty acid + H(+). It carries out the reaction a 1,2-diacyl-sn-glycero-3-phosphocholine + H2O = a 2-acyl-sn-glycero-3-phosphocholine + a fatty acid + H(+). The enzyme catalyses 1,2-dihexadecanoyl-sn-glycero-3-phosphocholine + H2O = 1-hexadecanoyl-sn-glycero-3-phosphocholine + hexadecanoate + H(+). It catalyses the reaction 1,2-dihexadecanoyl-sn-glycero-3-phosphocholine + H2O = 2-hexadecanoyl-sn-glycero-3-phosphocholine + hexadecanoate + H(+). The catalysed reaction is 1-hexadecanoyl-2-(9Z-octadecenoyl)-sn-glycero-3-phosphocholine + H2O = 2-(9Z-octadecenoyl)-sn-glycero-3-phosphocholine + hexadecanoate + H(+). It carries out the reaction 1-hexadecanoyl-2-(9Z-octadecenoyl)-sn-glycero-3-phosphocholine + H2O = 1-hexadecanoyl-sn-glycero-3-phosphocholine + (9Z)-octadecenoate + H(+). The enzyme catalyses 1-hexadecanoyl-2-(5Z,8Z,11Z,14Z-eicosatetraenoyl)-sn-glycero-3-phosphocholine + H2O = 2-(5Z,8Z,11Z,14Z)-eicosatetraenoyl-sn-glycero-3-phosphocholine + hexadecanoate + H(+). It catalyses the reaction 1-hexadecanoyl-2-(9Z,12Z-octadecadienoyl)-sn-glycero-3-phosphoethanolamine + H2O = 1-hexadecanoyl-sn-glycero-3-phosphoethanolamine + (9Z,12Z)-octadecadienoate + H(+). The catalysed reaction is 1-hexadecanoyl-2-(9Z,12Z-octadecadienoyl)-sn-glycero-3-phosphoethanolamine + H2O = 2-(9Z,12Z)-octadecadienoyl-sn-glycero-3-phosphoethanolamine + hexadecanoate + H(+). It carries out the reaction 1-hexadecanoyl-2-(5Z,8Z,11Z,14Z-eicosatetraenoyl)-sn-glycero-3-phosphoethanolamine + H2O = 2-(5Z,8Z,11Z,14Z)-eicosatetraenoyl-sn-glycero-3-phosphoethanolamine + hexadecanoate + H(+). The enzyme catalyses 1-hexanoyl-2-acyl-sn-glycero-3-phosphocholine + H2O = hexanoate + a 2-acyl-sn-glycero-3-phosphocholine + H(+). It catalyses the reaction 1,2-diheptadecanoyl-sn-glycero-3-phosphoethanolamine + 1-(9Z-octadecenoyl)-2-hexadecanoyl-sn-glycero-3-phosphocholine = 1,2-diheptadecanoyl-sn-glycero-3-phospho-N-hexadecanoyl-ethanolamine + 1-(9Z-octadecenoyl)-sn-glycero-3-phosphocholine + H(+). The catalysed reaction is 1,2-diheptadecanoyl-sn-glycero-3-phosphoethanolamine + 1-(9Z-octadecenoyl)-2-hexadecanoyl-sn-glycero-3-phosphocholine = 1,2-diheptadecanoyl-sn-glycero-3-phospho-N-(9Z-octadecenoyl)-ethanolamine + 2-hexadecanoyl-sn-glycero-3-phosphocholine + H(+). Functionally, exhibits both phospholipase A1/2 and acyltransferase activities. Shows phospholipase A1 (PLA1) and A2 (PLA2), catalyzing the calcium-independent release of fatty acids from the sn-1 or sn-2 position of glycerophospholipids. For most substrates, PLA1 activity is much higher than PLA2 activity. Shows O-acyltransferase activity, catalyzing the transfer of a fatty acyl group from glycerophospholipid to the hydroxyl group of lysophospholipid. Shows N-acyltransferase activity, catalyzing the calcium-independent transfer of a fatty acyl group at the sn-1 position of phosphatidylcholine (PC) and other glycerophospholipids to the primary amine of phosphatidylethanolamine (PE), forming N-acylphosphatidylethanolamine (NAPE), which serves as precursor for N-acylethanolamines (NAEs). Promotes keratinocyte differentiation via activation of TGM1. This Homo sapiens (Human) protein is Phospholipase A and acyltransferase 4.